Here is a 147-residue protein sequence, read N- to C-terminus: UPF0178 protein CV_1768 (147 aa).

The protein belongs to the UPF0178 family.

In Chromobacterium violaceum (strain ATCC 12472 / DSM 30191 / JCM 1249 / CCUG 213 / NBRC 12614 / NCIMB 9131 / NCTC 9757 / MK), this protein is UPF0178 protein CV_1768.